We begin with the raw amino-acid sequence, 154 residues long: Large ribosomal subunit protein uL22 (154 aa).

Belongs to the universal ribosomal protein uL22 family. As to quaternary structure, part of the 50S ribosomal subunit.

Functionally, this protein binds specifically to 23S rRNA. It makes multiple contacts with different domains of the 23S rRNA in the assembled 50S subunit and ribosome. The globular domain of the protein is located near the polypeptide exit tunnel on the outside of the subunit, while an extended beta-hairpin is found that lines the wall of the exit tunnel in the center of the 70S ribosome. The chain is Large ribosomal subunit protein uL22 from Methanosphaera stadtmanae (strain ATCC 43021 / DSM 3091 / JCM 11832 / MCB-3).